The chain runs to 481 residues: Beta-amyrin 28-monooxygenase (481 aa).

Residues 4-24 (FYVPLLSLFVLFVSLSFYFLF) traverse the membrane as a helical segment. C428 provides a ligand contact to heme.

This sequence belongs to the cytochrome P450 family. It depends on heme as a cofactor.

It is found in the membrane. It carries out the reaction beta-amyrin + 3 reduced [NADPH--hemoprotein reductase] + 3 O2 = oleanolate + 3 oxidized [NADPH--hemoprotein reductase] + 4 H2O + 4 H(+). Catalyzes the oxidation of the methyl group to a carboxyl group at the C-28 position of beta-amyrin to form oleanolate. In Kalopanax septemlobus (Castor aralia), this protein is Beta-amyrin 28-monooxygenase.